Reading from the N-terminus, the 61-residue chain is Small ribosomal subunit protein uS14 (61 aa).

Positions 24, 27, 40, and 43 each coordinate Zn(2+).

Belongs to the universal ribosomal protein uS14 family. Zinc-binding uS14 subfamily. In terms of assembly, part of the 30S ribosomal subunit. Contacts proteins S3 and S10. Zn(2+) is required as a cofactor.

Functionally, binds 16S rRNA, required for the assembly of 30S particles and may also be responsible for determining the conformation of the 16S rRNA at the A site. The chain is Small ribosomal subunit protein uS14 from Thermus thermophilus (strain ATCC BAA-163 / DSM 7039 / HB27).